Reading from the N-terminus, the 132-residue chain is Phosphoribosyl-AMP cyclohydrolase (132 aa).

Asp78 serves as a coordination point for Mg(2+). Residue Cys79 participates in Zn(2+) binding. 2 residues coordinate Mg(2+): Asp80 and Asp82. Residues Cys96 and Cys103 each coordinate Zn(2+).

It belongs to the PRA-CH family. In terms of assembly, homodimer. Requires Mg(2+) as cofactor. It depends on Zn(2+) as a cofactor.

The protein resides in the cytoplasm. The enzyme catalyses 1-(5-phospho-beta-D-ribosyl)-5'-AMP + H2O = 1-(5-phospho-beta-D-ribosyl)-5-[(5-phospho-beta-D-ribosylamino)methylideneamino]imidazole-4-carboxamide. Its pathway is amino-acid biosynthesis; L-histidine biosynthesis; L-histidine from 5-phospho-alpha-D-ribose 1-diphosphate: step 3/9. Its function is as follows. Catalyzes the hydrolysis of the adenine ring of phosphoribosyl-AMP. The chain is Phosphoribosyl-AMP cyclohydrolase from Nitrosococcus oceani (strain ATCC 19707 / BCRC 17464 / JCM 30415 / NCIMB 11848 / C-107).